The chain runs to 214 residues: Uracil phosphoribosyltransferase (214 aa).

5-phospho-alpha-D-ribose 1-diphosphate contacts are provided by residues Arg81, Arg106, and Asp133–Ser141. Uracil is bound by residues Ile196 and Gly201–Ala203. Asp202 is a 5-phospho-alpha-D-ribose 1-diphosphate binding site.

It belongs to the UPRTase family. Mg(2+) is required as a cofactor.

It catalyses the reaction UMP + diphosphate = 5-phospho-alpha-D-ribose 1-diphosphate + uracil. It functions in the pathway pyrimidine metabolism; UMP biosynthesis via salvage pathway; UMP from uracil: step 1/1. Allosterically activated by GTP. Functionally, catalyzes the conversion of uracil and 5-phospho-alpha-D-ribose 1-diphosphate (PRPP) to UMP and diphosphate. This is Uracil phosphoribosyltransferase from Legionella pneumophila subsp. pneumophila (strain Philadelphia 1 / ATCC 33152 / DSM 7513).